A 191-amino-acid polypeptide reads, in one-letter code: tRNA-specific adenosine deaminase 2 (191 aa).

Positions 20–145 constitute a CMP/dCMP-type deaminase domain; it reads EETEKWMEQA…SVLDIASADL (126 aa). Residue histidine 71 participates in Zn(2+) binding. Glutamate 73 serves as the catalytic Proton donor. Zn(2+)-binding residues include cysteine 107 and cysteine 110.

Belongs to the cytidine and deoxycytidylate deaminase family. ADAT2 subfamily. Zn(2+) is required as a cofactor.

The catalysed reaction is adenosine(34) in tRNA + H2O + H(+) = inosine(34) in tRNA + NH4(+). In terms of biological role, probably participates in deamination of adenosine-34 to inosine in many tRNAs. This Bos taurus (Bovine) protein is tRNA-specific adenosine deaminase 2 (DEADC1).